Reading from the N-terminus, the 521-residue chain is Probable methylmalonate-semialdehyde/malonate-semialdehyde dehydrogenase [acylating], mitochondrial (521 aa).

NAD(+)-binding residues include F172, K196, E199, R200, and S249. C304 acts as the Nucleophile in catalysis. E404 provides a ligand contact to NAD(+).

Belongs to the aldehyde dehydrogenase family. In terms of assembly, homotetramer.

Its subcellular location is the mitochondrion. The enzyme catalyses 2-methyl-3-oxopropanoate + NAD(+) + CoA + H2O = propanoyl-CoA + hydrogencarbonate + NADH + H(+). The catalysed reaction is 3-oxopropanoate + NAD(+) + CoA + H2O = hydrogencarbonate + acetyl-CoA + NADH + H(+). Its function is as follows. Probable malonate and methylmalonate semialdehyde dehydrogenase involved in the catabolism of valine, thymine, and compounds catabolized by way of beta-alanine, including uracil and cytidine. The protein is Probable methylmalonate-semialdehyde/malonate-semialdehyde dehydrogenase [acylating], mitochondrial of Aedes aegypti (Yellowfever mosquito).